A 552-amino-acid chain; its full sequence is Chaperonin GroEL (552 aa).

Residues 30–33 (TLGP), Lys-51, 87–91 (DGTTT), Gly-415, 479–481 (NAA), and Asp-495 contribute to the ATP site.

The protein belongs to the chaperonin (HSP60) family. As to quaternary structure, forms a cylinder of 14 subunits composed of two heptameric rings stacked back-to-back. Interacts with the co-chaperonin GroES.

Its subcellular location is the cytoplasm. The enzyme catalyses ATP + H2O + a folded polypeptide = ADP + phosphate + an unfolded polypeptide.. Its function is as follows. Together with its co-chaperonin GroES, plays an essential role in assisting protein folding. The GroEL-GroES system forms a nano-cage that allows encapsulation of the non-native substrate proteins and provides a physical environment optimized to promote and accelerate protein folding. The sequence is that of Chaperonin GroEL from Stutzerimonas stutzeri (Pseudomonas stutzeri).